Consider the following 379-residue polypeptide: Stimulator of interferon genes protein (379 aa).

The Cytoplasmic portion of the chain corresponds to 1-23 (MPQDPSTRSSPARLLIPEPRAGR). A helical membrane pass occupies residues 24–40 (ARHAACVLLAVCFVVLF). Over 41 to 50 (LSGEPLAPII) the chain is Lumenal. Residues 51–75 (RSVCTQLAALQLGVLLKGCCCLAEE) traverse the membrane as a helical segment. At 76 to 97 (IFHLHSRHHGSLWQVLCSCFPP) the chain is on the cytoplasmic side. The chain crosses the membrane as a helical span at residues 98–111 (RWYLALLLVGGSAY). Residues 112–121 (LDPPEDNGHS) are Lumenal-facing. Residues 122-139 (PRLALTLSCLCQLLVLAL) traverse the membrane as a helical segment. At 140–379 (GLQKLSAVEV…LPQPLRSDCP (240 aa)) the chain is on the cytoplasmic side. Residues 158–345 (KNVAHGLAWS…WHLQQQQREE (188 aa)) form a cyclic dinucleotide-binding domain (CBD) region. 3',3'-c-di-GMP contacts are provided by residues serine 167, tyrosine 172, 243-246 (RVYK), and serine 268. 2',3'-cGAMP contacts are provided by residues 167–172 (SYYIGY), 243–246 (RVYK), and serine 268. The short motif at 363-366 (LQVS) is the pLxIS motif element. Serine 366 bears the Phosphoserine; by TBK1 mark.

It belongs to the STING family. Homodimer; forms a homodimer in absence of cyclic nucleotide (c-di-GMP or cGAMP). Homotetramer; in presence of cyclic nucleotide (c-di-GMP or cGAMP), forms tetramers and higher-order oligomers through side-by-side packing. Interacts (when phosphorylated) with IRF3; following activation and phosphorylation on the pLxIS motif by TBK1, recruits IRF3. Post-translationally, phosphorylation by TBK1 leads to activation and production of IFN-beta. Following cyclic nucleotide (c-di-GMP or cGAMP)-binding, activation and translocation from the endoplasmic reticulum, STING1 is phosphorylated by TBK1 at Ser-366 in the pLxIS motif. The phosphorylated pLxIS motif constitutes an IRF3-binding motif, leading to recruitment of the transcription factor IRF3 to induce type-I interferons and other cytokines.

Its subcellular location is the endoplasmic reticulum membrane. It is found in the cytoplasm. The protein resides in the perinuclear region. The protein localises to the endoplasmic reticulum-Golgi intermediate compartment membrane. It localises to the golgi apparatus membrane. Its subcellular location is the cytoplasmic vesicle. It is found in the autophagosome membrane. The enzyme catalyses H(+)(in) = H(+)(out). Facilitator of innate immune signaling that acts as a sensor of cytosolic DNA from bacteria and viruses and promotes the production of type I interferon (IFN-alpha and IFN-beta). Innate immune response is triggered in response to non-CpG double-stranded DNA from viruses and bacteria delivered to the cytoplasm. Acts by binding cyclic dinucleotides: recognizes and binds cyclic di-GMP (c-di-GMP), a second messenger produced by bacteria, and cyclic GMP-AMP (cGAMP), a messenger produced by CGAS in response to DNA virus in the cytosol. Upon binding of c-di-GMP or cGAMP, STING1 oligomerizes and is able to activate both NF-kappa-B and IRF3 transcription pathways to induce expression of type I interferon and exert a potent anti-viral state. Exhibits 2',3' phosphodiester linkage-specific ligand recognition: can bind both 2'-3' linked cGAMP and 3'-3' linked cGAMP but is preferentially activated by 2'-3' linked cGAMP. In addition to promote the production of type I interferons, plays a direct role in autophagy. Following cGAMP-binding, STING1 buds from the endoplasmic reticulum into COPII vesicles, which then form the endoplasmic reticulum-Golgi intermediate compartment (ERGIC). The ERGIC serves as the membrane source for LC3 lipidation, leading to formation of autophagosomes that target cytosolic DNA or DNA viruses for degradation by the lysosome. Promotes autophagy by acting as a proton channel that directs proton efflux from the Golgi to facilitate LC3 lipidation. The autophagy- and interferon-inducing activities can be uncoupled and autophagy induction is independent of TBK1 phosphorylation. The protein is Stimulator of interferon genes protein of Gallus gallus (Chicken).